A 276-amino-acid polypeptide reads, in one-letter code: Formamidopyrimidine-DNA glycosylase (276 aa).

Catalysis depends on P2, which acts as the Schiff-base intermediate with DNA. The active-site Proton donor is the E3. K58 serves as the catalytic Proton donor; for beta-elimination activity. Positions 94, 112, and 157 each coordinate DNA. The FPG-type zinc-finger motif lies at 242-276 (FVYDRAGLPCRVCGTPIKQIVQGQRSTYFCPTCQR). The active-site Proton donor; for delta-elimination activity is the R266.

It belongs to the FPG family. In terms of assembly, monomer. The cofactor is Zn(2+).

It catalyses the reaction Hydrolysis of DNA containing ring-opened 7-methylguanine residues, releasing 2,6-diamino-4-hydroxy-5-(N-methyl)formamidopyrimidine.. It carries out the reaction 2'-deoxyribonucleotide-(2'-deoxyribose 5'-phosphate)-2'-deoxyribonucleotide-DNA = a 3'-end 2'-deoxyribonucleotide-(2,3-dehydro-2,3-deoxyribose 5'-phosphate)-DNA + a 5'-end 5'-phospho-2'-deoxyribonucleoside-DNA + H(+). Functionally, involved in base excision repair of DNA damaged by oxidation or by mutagenic agents. Acts as a DNA glycosylase that recognizes and removes damaged bases. Has a preference for oxidized purines, such as 7,8-dihydro-8-oxoguanine (8-oxoG). Has AP (apurinic/apyrimidinic) lyase activity and introduces nicks in the DNA strand. Cleaves the DNA backbone by beta-delta elimination to generate a single-strand break at the site of the removed base with both 3'- and 5'-phosphates. The chain is Formamidopyrimidine-DNA glycosylase from Paraburkholderia xenovorans (strain LB400).